We begin with the raw amino-acid sequence, 184 residues long: Glutathione-regulated potassium-efflux system ancillary protein KefG (184 aa).

This sequence belongs to the NAD(P)H dehydrogenase (quinone) family. KefG subfamily. As to quaternary structure, interacts with KefB.

It is found in the cell inner membrane. It carries out the reaction a quinone + NADH + H(+) = a quinol + NAD(+). The enzyme catalyses a quinone + NADPH + H(+) = a quinol + NADP(+). Regulatory subunit of a potassium efflux system that confers protection against electrophiles. Required for full activity of KefB. The sequence is that of Glutathione-regulated potassium-efflux system ancillary protein KefG from Shigella dysenteriae serotype 1 (strain Sd197).